Reading from the N-terminus, the 330-residue chain is Ketol-acid reductoisomerase (NADP(+)) (330 aa).

The KARI N-terminal Rossmann domain maps to 1–182 (MAVVYYDQDA…GATRAGVIET (182 aa)). NADP(+)-binding positions include 25–28 (YGSQ), Arg-48, Ser-51, Ser-53, and 83–86 (DETQ). The active site involves His-108. Gly-134 serves as a coordination point for NADP(+). The 146-residue stretch at 183–328 (TFKEETETDL…DQLREMMSWL (146 aa)) folds into the KARI C-terminal knotted domain. Asp-191, Glu-195, Glu-227, and Glu-231 together coordinate Mg(2+). Ser-252 contacts substrate.

This sequence belongs to the ketol-acid reductoisomerase family. Mg(2+) serves as cofactor.

The catalysed reaction is (2R)-2,3-dihydroxy-3-methylbutanoate + NADP(+) = (2S)-2-acetolactate + NADPH + H(+). The enzyme catalyses (2R,3R)-2,3-dihydroxy-3-methylpentanoate + NADP(+) = (S)-2-ethyl-2-hydroxy-3-oxobutanoate + NADPH + H(+). It participates in amino-acid biosynthesis; L-isoleucine biosynthesis; L-isoleucine from 2-oxobutanoate: step 2/4. Its pathway is amino-acid biosynthesis; L-valine biosynthesis; L-valine from pyruvate: step 2/4. Functionally, involved in the biosynthesis of branched-chain amino acids (BCAA). Catalyzes an alkyl-migration followed by a ketol-acid reduction of (S)-2-acetolactate (S2AL) to yield (R)-2,3-dihydroxy-isovalerate. In the isomerase reaction, S2AL is rearranged via a Mg-dependent methyl migration to produce 3-hydroxy-3-methyl-2-ketobutyrate (HMKB). In the reductase reaction, this 2-ketoacid undergoes a metal-dependent reduction by NADPH to yield (R)-2,3-dihydroxy-isovalerate. The polypeptide is Ketol-acid reductoisomerase (NADP(+)) (Moorella thermoacetica (strain ATCC 39073 / JCM 9320)).